Here is a 1292-residue protein sequence, read N- to C-terminus: Epidermal growth factor receptor (1292 aa).

The Extracellular segment spans residues 1-641; that stretch reads MYNNYNLCHI…AGLIENELQP (641 aa). N-linked (GlcNAc...) asparagine glycans are attached at residues Asn-31, Asn-224, Asn-263, Asn-323, Asn-342, Asn-600, and Asn-605. Residues 642 to 662 traverse the membrane as a helical segment; the sequence is AILAGVAVFALAFLVVAAIIM. At 663 to 1292 the chain is on the cytoplasmic side; it reads YFWRVRAKAK…KPLRKNETTV (630 aa). Thr-675 carries the post-translational modification Phosphothreonine; by PKC. Residues 711–978 enclose the Protein kinase domain; the sequence is MRKGGILGYG…KMSRDPGRYL (268 aa). ATP-binding positions include 717 to 725 and Lys-744; that span reads LGYGAFGNV. Residue Asp-836 is the Proton acceptor of the active site. The disordered stretch occupies residues 1022–1066; sequence PKSRAPIPPGLSASSTSGSPPNTPVKPCWPNGKPLAADSPTPQNQ. Tyr-1166 carries the phosphotyrosine; by autocatalysis modification. The tract at residues 1253-1292 is disordered; the sequence is SQVRQRSSEEESDHEYYNDFDRLERELQPLKPLRKNETTV. Residues 1258–1292 show a composition bias toward basic and acidic residues; it reads RSSEEESDHEYYNDFDRLERELQPLKPLRKNETTV.

It belongs to the protein kinase superfamily. Tyr protein kinase family. EGF receptor subfamily.

The protein resides in the membrane. It carries out the reaction L-tyrosyl-[protein] + ATP = O-phospho-L-tyrosyl-[protein] + ADP + H(+). With respect to regulation, activated by MRJP1 during queen determination of honeybee larvae. Functionally, upon binding to its ligands, transduces the signal through the ras-raf-MAPK pathway and is involved in a myriad of developmental decisions. Involved in the determination of adult size, ovary development, and development timing, especially during queen determination of honeybee larvae. May have an important role in the prolongation of longevity in queens. The sequence is that of Epidermal growth factor receptor (Egfr) from Apis mellifera (Honeybee).